A 333-amino-acid chain; its full sequence is Phosphate acyltransferase (333 aa).

This sequence belongs to the PlsX family. As to quaternary structure, homodimer. Probably interacts with PlsY.

The protein localises to the cytoplasm. The enzyme catalyses a fatty acyl-[ACP] + phosphate = an acyl phosphate + holo-[ACP]. The protein operates within lipid metabolism; phospholipid metabolism. Its function is as follows. Catalyzes the reversible formation of acyl-phosphate (acyl-PO(4)) from acyl-[acyl-carrier-protein] (acyl-ACP). This enzyme utilizes acyl-ACP as fatty acyl donor, but not acyl-CoA. The chain is Phosphate acyltransferase from Thermosipho melanesiensis (strain DSM 12029 / CIP 104789 / BI429).